A 979-amino-acid chain; its full sequence is Pheromone-regulated membrane protein 10 (979 aa).

5 disordered regions span residues Met1 to Lys279, Leu295 to Gly318, Tyr337 to Val411, Phe432 to Asp451, and Ala491 to Phe528. Residues Gly15 to Ser26 are compositionally biased toward basic and acidic residues. Positions Ser29–Ser38 are enriched in low complexity. The segment covering Leu54–Trp68 has biased composition (acidic residues). Polar residues predominate over residues Asp77–Asn86. Residues Ala105–Arg115 show a composition bias toward basic and acidic residues. Acidic residues predominate over residues Glu122 to Met135. Basic and acidic residues-rich tracts occupy residues Glu138–Asp148 and Ser158–Thr175. The span at Glu192–Asn213 shows a compositional bias: polar residues. A compositionally biased stretch (basic and acidic residues) spans Gly253–Asp263. Positions Ser360–Ser372 are enriched in low complexity. Residues Asp379–Leu395 show a composition bias toward acidic residues. The span at Ala503–Asn515 shows a compositional bias: polar residues. The segment covering Thr516–Phe528 has biased composition (basic residues). 10 helical membrane-spanning segments follow: residues Trp658–Gly678, Trp680–Val700, Val710–Gly730, Ile734–Leu754, Phe773–Phe793, Pro809–Ile829, Ala832–Tyr852, Phe864–Trp884, Gly886–Ser906, and Ile946–Val966.

Belongs to the ThrE exporter (TC 2.A.79) family.

The protein resides in the membrane. The sequence is that of Pheromone-regulated membrane protein 10 from Zygosaccharomyces rouxii (strain ATCC 2623 / CBS 732 / NBRC 1130 / NCYC 568 / NRRL Y-229).